Here is a 911-residue protein sequence, read N- to C-terminus: Probable 2-oxoadipate dehydrogenase complex component E1 homolog (911 aa).

The protein belongs to the alpha-ketoglutarate dehydrogenase family. Requires thiamine diphosphate as cofactor.

Its subcellular location is the mitochondrion. It catalyses the reaction N(6)-[(R)-lipoyl]-L-lysyl-[protein] + 2-oxoadipate + H(+) = N(6)-[(R)-S(8)-glutaryldihydrolipoyl]-L-lysyl-[protein] + CO2. Its function is as follows. 2-oxoadipate dehydrogenase (E1a) component of the 2-oxoadipate dehydrogenase complex (OADHC). Participates in the first step, rate limiting for the overall conversion of 2-oxoadipate (alpha-ketoadipate) to glutaryl-CoA and CO(2) catalyzed by the whole OADHC. Catalyzes the irreversible decarboxylation of 2-oxoadipate via the thiamine diphosphate (ThDP) cofactor and subsequent transfer of the decarboxylated acyl intermediate on an oxidized dihydrolipoyl group that is covalently amidated to the E2 enzyme (dihydrolipoyllysine-residue succinyltransferase or DLST). This chain is Probable 2-oxoadipate dehydrogenase complex component E1 homolog, found in Caenorhabditis elegans.